The primary structure comprises 251 residues: tRNA1(Val) (adenine(37)-N6)-methyltransferase (251 aa).

The protein belongs to the methyltransferase superfamily. tRNA (adenine-N(6)-)-methyltransferase family.

The protein resides in the cytoplasm. The enzyme catalyses adenosine(37) in tRNA1(Val) + S-adenosyl-L-methionine = N(6)-methyladenosine(37) in tRNA1(Val) + S-adenosyl-L-homocysteine + H(+). Its function is as follows. Specifically methylates the adenine in position 37 of tRNA(1)(Val) (anticodon cmo5UAC). This Shewanella frigidimarina (strain NCIMB 400) protein is tRNA1(Val) (adenine(37)-N6)-methyltransferase.